Here is a 417-residue protein sequence, read N- to C-terminus: Histidinol-phosphate aminotransferase 1, chloroplastic (417 aa).

Residues 1 to 40 (MGVINVQGSPSFSIHSSESNLRKSRALKKPFCSIRNRVYC) constitute a chloroplast transit peptide. The residue at position 41 (alanine 41) is an N-acetylalanine. Lysine 277 carries the post-translational modification N6-(pyridoxal phosphate)lysine.

This sequence belongs to the class-II pyridoxal-phosphate-dependent aminotransferase family. Histidinol-phosphate aminotransferase subfamily. As to quaternary structure, homodimer. The cofactor is pyridoxal 5'-phosphate. As to expression, expressed in both vegetative and reproductive tissues.

It is found in the plastid. The protein resides in the chloroplast. It catalyses the reaction L-histidinol phosphate + 2-oxoglutarate = 3-(imidazol-4-yl)-2-oxopropyl phosphate + L-glutamate. It participates in amino-acid biosynthesis; L-histidine biosynthesis; L-histidine from 5-phospho-alpha-D-ribose 1-diphosphate: step 7/9. This chain is Histidinol-phosphate aminotransferase 1, chloroplastic (HISN6A), found in Arabidopsis thaliana (Mouse-ear cress).